We begin with the raw amino-acid sequence, 810 residues long: Fibroblast growth factor receptor 1-A (810 aa).

The first 26 residues, 1 to 26 (MKMMMIMKTTLLLISVLLTQALQSQG), serve as a signal peptide directing secretion. The Extracellular segment spans residues 27–363 (RPAIQDEAPA…TQLPNQTYLE (337 aa)). Ig-like C2-type domains lie at 28–115 (PAIQ…FNIS), 147–235 (PDKM…YQLD), and 244–346 (PILQ…AWLT). Cysteine 53 and cysteine 99 form a disulfide bridge. Asparagine 107, asparagine 113, asparagine 216, asparagine 229, asparagine 253, asparagine 285, asparagine 306, asparagine 319, and asparagine 358 each carry an N-linked (GlcNAc...) asparagine glycan. An intrachain disulfide couples cysteine 167 to cysteine 219. Cysteine 266 and cysteine 330 form a disulfide bridge. A helical transmembrane segment spans residues 364-384 (VLIYCVGFFLICVMVGTAVLA). Topologically, residues 385 to 810 (KMHSSAKKSD…PNRGVAFKKR (426 aa)) are cytoplasmic. The residue at position 450 (tyrosine 450) is a Phosphotyrosine; by autocatalysis. In terms of domain architecture, Protein kinase spans 465 to 754 (LVLGKPLGEG…LSMTSNQEYL (290 aa)). ATP contacts are provided by residues 471–477 (LGEGCFG), lysine 501, 549–551 (EFA), and asparagine 555. Residues tyrosine 570 and tyrosine 572 each carry the phosphotyrosine; by autocatalysis modification. The active-site Proton acceptor is aspartate 610. Residues arginine 614 and aspartate 628 each contribute to the ATP site. Phosphotyrosine; by autocatalysis occurs at positions 640, 641, 717, and 753. The tract at residues 787-810 (AGADEPCLPKFPPHPNRGVAFKKR) is disordered.

Belongs to the protein kinase superfamily. Tyr protein kinase family. Fibroblast growth factor receptor subfamily. In terms of assembly, monomer. Homodimer after ligand binding. Interacts with cnpy1. Autophosphorylated. Binding of FGF family members together with heparan sulfate proteoglycan or heparin promotes receptor dimerization and autophosphorylation on tyrosine residues. Autophosphorylation occurs in trans between the two FGFR molecules present in the dimer and proceeds in a highly ordered manner. Phosphotyrosine residues provide docking sites for interacting proteins and so are crucial for FGFR1 function and its regulation. Post-translationally, ubiquitinated. FGFR1 is rapidly ubiquitinated after autophosphorylation, leading to internalization and degradation. In terms of processing, N-glycosylated in the endoplasmic reticulum. The N-glycan chains undergo further maturation to an Endo H-resistant form in the Golgi apparatus. Initially expressed in adaxial mesoderm with transcripts distinctly localized to the anterior portion of each half-somite. Hereupon, also strongly expressed in the otic vesicles, branchial arches and the brain, especially at the midbrain-hindbrain boundary (MHB).

Its subcellular location is the cell membrane. It localises to the nucleus. The protein resides in the cytoplasm. The protein localises to the cytosol. It is found in the cytoplasmic vesicle. The enzyme catalyses L-tyrosyl-[protein] + ATP = O-phospho-L-tyrosyl-[protein] + ADP + H(+). With respect to regulation, present in an inactive conformation in the absence of bound ligand. Ligand binding leads to dimerization and activation by sequential autophosphorylation on tyrosine residues. In terms of biological role, tyrosine-protein kinase that acts as a cell-surface receptor for fibroblast growth factors and plays an essential role in the regulation of embryonic development, cell proliferation, differentiation and migration. Required for normal mesoderm patterning and normal skeletogenesis. Phosphorylates PLCG1, FRS2, GAB1 and SHB. Ligand binding leads to the activation of several signaling cascades. Activation of PLCG1 leads to the production of the cellular signaling molecules diacylglycerol and inositol-1,4,5-trisphosphate. Phosphorylation of FRS2 triggers recruitment of GRB2, GAB1, PIK3R1 and SOS1, and mediates activation of RAS, MAPK1/ERK2, MAPK3/ERK1 and the MAP kinase signaling pathway, as well as of the AKT1 signaling pathway. Promotes phosphorylation of SHC1, STAT1 and PTPN11/SHP2. In the nucleus, enhances RPS6KA1 and CREB1 activity and contributes to the regulation of transcription. FGFR1 signaling is down-regulated by ubiquitination, internalization and degradation. The polypeptide is Fibroblast growth factor receptor 1-A (fgfr1a) (Danio rerio (Zebrafish)).